The following is a 340-amino-acid chain: Uroporphyrinogen decarboxylase (340 aa).

Substrate is bound by residues 21-25 (RQAGR), F40, D71, Y146, S201, and H316.

The protein belongs to the uroporphyrinogen decarboxylase family. In terms of assembly, homodimer.

It is found in the cytoplasm. It carries out the reaction uroporphyrinogen III + 4 H(+) = coproporphyrinogen III + 4 CO2. Its pathway is porphyrin-containing compound metabolism; protoporphyrin-IX biosynthesis; coproporphyrinogen-III from 5-aminolevulinate: step 4/4. Its function is as follows. Catalyzes the decarboxylation of four acetate groups of uroporphyrinogen-III to yield coproporphyrinogen-III. This is Uroporphyrinogen decarboxylase from Rickettsia bellii (strain RML369-C).